The chain runs to 371 residues: 3-isopropylmalate dehydrogenase B (371 aa).

An NAD(+)-binding site is contributed by 79-93; sequence GSKVDHIRRGLDGPE. Substrate-binding residues include arginine 100, arginine 110, arginine 142, and aspartate 229. The Mg(2+) site is built by aspartate 229, aspartate 254, and aspartate 258. NAD(+) is bound at residue 296 to 308; the sequence is GSAPTIAGKNIAN.

The protein belongs to the isocitrate and isopropylmalate dehydrogenases family. In terms of assembly, homodimer. Mg(2+) is required as a cofactor. Requires Mn(2+) as cofactor.

The protein resides in the cytoplasm. The enzyme catalyses (2R,3S)-3-isopropylmalate + NAD(+) = 4-methyl-2-oxopentanoate + CO2 + NADH. It participates in amino-acid biosynthesis; L-leucine biosynthesis; L-leucine from 3-methyl-2-oxobutanoate: step 3/4. Catalyzes the oxidation of 3-carboxy-2-hydroxy-4-methylpentanoate (3-isopropylmalate) to 3-carboxy-4-methyl-2-oxopentanoate. The product decarboxylates to 4-methyl-2 oxopentanoate. The protein is 3-isopropylmalate dehydrogenase B (leu2B) of Aspergillus niger.